Here is a 258-residue protein sequence, read N- to C-terminus: Thiazole synthase (258 aa).

Lys100 functions as the Schiff-base intermediate with DXP in the catalytic mechanism. 1-deoxy-D-xylulose 5-phosphate is bound by residues Gly161, 187 to 188 (AG), and 209 to 210 (NS).

Belongs to the ThiG family. Homotetramer. Forms heterodimers with either ThiH or ThiS.

It localises to the plastid. Its subcellular location is the chloroplast. The catalysed reaction is [ThiS sulfur-carrier protein]-C-terminal-Gly-aminoethanethioate + 2-iminoacetate + 1-deoxy-D-xylulose 5-phosphate = [ThiS sulfur-carrier protein]-C-terminal Gly-Gly + 2-[(2R,5Z)-2-carboxy-4-methylthiazol-5(2H)-ylidene]ethyl phosphate + 2 H2O + H(+). It participates in cofactor biosynthesis; thiamine diphosphate biosynthesis. Catalyzes the rearrangement of 1-deoxy-D-xylulose 5-phosphate (DXP) to produce the thiazole phosphate moiety of thiamine. Sulfur is provided by the thiocarboxylate moiety of the carrier protein ThiS. In vitro, sulfur can be provided by H(2)S. The chain is Thiazole synthase from Cyanidioschyzon merolae (strain NIES-3377 / 10D) (Unicellular red alga).